The primary structure comprises 202 residues: Na(+)-translocating NADH-quinone reductase subunit E (202 aa).

Transmembrane regions (helical) follow at residues alanine 11–isoleucine 31, valine 35–alanine 55, leucine 79–glutamate 99, glycine 114–valine 134, valine 144–isoleucine 164, and leucine 180–valine 200.

Belongs to the NqrDE/RnfAE family. In terms of assembly, composed of six subunits; NqrA, NqrB, NqrC, NqrD, NqrE and NqrF.

The protein localises to the cell inner membrane. The catalysed reaction is a ubiquinone + n Na(+)(in) + NADH + H(+) = a ubiquinol + n Na(+)(out) + NAD(+). NQR complex catalyzes the reduction of ubiquinone-1 to ubiquinol by two successive reactions, coupled with the transport of Na(+) ions from the cytoplasm to the periplasm. NqrA to NqrE are probably involved in the second step, the conversion of ubisemiquinone to ubiquinol. This chain is Na(+)-translocating NADH-quinone reductase subunit E, found in Stutzerimonas stutzeri (strain A1501) (Pseudomonas stutzeri).